The chain runs to 497 residues: MALPTLPSYWSSRKHMDLRQRQHQQEDQFRQQWEQNSRYFRTWDIHNSKQIEWSSKISYQRSMHAYHCEKMKEEKRKILELRRERLRELLLEEQDLLAAELDELRLSMGLREQRLREQHQDLKSAREEQRKLIAERLLYEHWKKNNPKLRELELDLHKKHVINSWATQKEEKKQQEATEKQENKRLENQYAAARREAEARMRVEEERRQLEGRLQAEALRQQMEELKQKEMEATKLKKEQENLLRQRWELERLEEERRQMAALRRKTELGRFLKHQYNAQLNRRTQEIQEELEVDGRILQALLEKEGELQQVELARREQARADAAWMKQVIEEQLQLEKAREAELQQLLREEAKEMWEKREAEWAREQVARDRLMSEVLTGRQQQILEKIEQNRRAQEETLKHREKLIRSLEEGKQLAQRAKEESEELKLARKQELEAQVAERQGQEWEAARQEEEEEEEARQAEEHSNALLQQEAKTMAEKGYQPKLHGHLRIAWD.

Coiled coils occupy residues 67 to 140 (HCEK…LLYE), 166 to 271 (ATQK…ELGR), and 327 to 479 (MKQV…AKTM). Positions 72 to 457 (KEEKRKILEL…WEAARQEEEE (386 aa)) are interaction with keratin proteins. A disordered region spans residues 167 to 188 (TQKEEKKQQEATEKQENKRLEN). Residues 168–188 (QKEEKKQQEATEKQENKRLEN) are compositionally biased toward basic and acidic residues. The segment at 258–424 (RQMAALRRKT…KQLAQRAKEE (167 aa)) is trichohyalin/plectin homology domain. The disordered stretch occupies residues 441–497 (AERQGQEWEAARQEEEEEEEARQAEEHSNALLQQEAKTMAEKGYQPKLHGHLRIAWD). Positions 444 to 453 (QGQEWEAARQ) are enriched in basic and acidic residues. Residues 488–497 (LHGHLRIAWD) show a composition bias toward basic residues.

It belongs to the TCHP family. In terms of assembly, interacts specifically with keratin proteins including, KRT5, KRT6A, KRT8, KRT14, KRT16 and KRT18. Interacts with KCTD17. Ubiquitinated. Ubiquitination by the BCR(KCTD17) E3 ubiquitin ligase complex results in proteasomal degradation, and induces ciliogenesis. Expressed in all tissues examined, including brain, liver, small intestine, large intestine, lung and heart. Found concentrated in tubular structures within hepatocytes, and in the apical cortical region and desmosomes of the apical junctional domain in enterocytes of the small intestine. In the hair follicle, localized at the outer root sheath. Also expressed in blood vessels (at protein level).

The protein resides in the cytoplasm. It localises to the cytoskeleton. Its subcellular location is the cell membrane. The protein localises to the mitochondrion. It is found in the microtubule organizing center. The protein resides in the centrosome. Tumor suppressor which has the ability to inhibit cell growth and be pro-apoptotic during cell stress. May act as a 'capping' or 'branching' protein for keratin filaments in the cell periphery. May regulate K8/K18 filament and desmosome organization mainly at the apical or peripheral regions of simple epithelial cells. Is a negative regulator of ciliogenesis. The protein is Trichoplein keratin filament-binding protein of Mus musculus (Mouse).